The sequence spans 94 residues: ESAT-6-like protein EsxI (94 aa).

Belongs to the WXG100 family. ESAT-6 subfamily.

The protein resides in the secreted. The chain is ESAT-6-like protein EsxI from Mycobacterium tuberculosis (strain CDC 1551 / Oshkosh).